The chain runs to 150 residues: Urease accessory protein UreE (150 aa).

It belongs to the UreE family.

It is found in the cytoplasm. Involved in urease metallocenter assembly. Binds nickel. Probably functions as a nickel donor during metallocenter assembly. The sequence is that of Urease accessory protein UreE from Streptococcus salivarius (strain 57.I).